A 122-amino-acid chain; its full sequence is Large ribosomal subunit protein uL14 (122 aa).

Belongs to the universal ribosomal protein uL14 family. Part of the 50S ribosomal subunit. Forms a cluster with proteins L3 and L19. In the 70S ribosome, L14 and L19 interact and together make contacts with the 16S rRNA in bridges B5 and B8.

Its function is as follows. Binds to 23S rRNA. Forms part of two intersubunit bridges in the 70S ribosome. In Thermobifida fusca (strain YX), this protein is Large ribosomal subunit protein uL14.